A 115-amino-acid polypeptide reads, in one-letter code: MAAIPSSGSLVATHDYYRRRLGSSSSSSSGGSAEYPGDAVLQSPGLPKADPGHWWASFFFGKSTLPFMTTVLESPERSAESPQVSRSPMTCGLTPETMKQQPVIHSGQTNPRDLS.

Ser-9 is subject to Phosphoserine. Disordered regions lie at residues 21 to 46 and 73 to 115; these read LGSS…SPGL and ESPE…RDLS. Over residues 22–32 the composition is skewed to low complexity; the sequence is GSSSSSSSGGS. A compositionally biased stretch (polar residues) spans 106–115; sequence SGQTNPRDLS.

It belongs to the PPDPF family.

Probable regulator of exocrine pancreas development. This is Pancreatic progenitor cell differentiation and proliferation factor (Ppdpf) from Mus musculus (Mouse).